Reading from the N-terminus, the 115-residue chain is NADH-ubiquinone oxidoreductase chain 3 (115 aa).

The next 3 membrane-spanning stretches (helical) occupy residues 3-23 (LMITLLTNTMLTSLMVLIAFW), 55-75 (FFLVAITFLLFDLEIALLLPL), and 86-106 (LTLLMSFMLIILLAIGLAYEW).

The protein belongs to the complex I subunit 3 family. In terms of assembly, core subunit of respiratory chain NADH dehydrogenase (Complex I) which is composed of 45 different subunits. Interacts with TMEM186. Interacts with TMEM242.

The protein resides in the mitochondrion inner membrane. It catalyses the reaction a ubiquinone + NADH + 5 H(+)(in) = a ubiquinol + NAD(+) + 4 H(+)(out). Core subunit of the mitochondrial membrane respiratory chain NADH dehydrogenase (Complex I) which catalyzes electron transfer from NADH through the respiratory chain, using ubiquinone as an electron acceptor. Essential for the catalytic activity of complex I. This is NADH-ubiquinone oxidoreductase chain 3 from Loxodonta africana (African elephant).